Here is a 242-residue protein sequence, read N- to C-terminus: MAGHSKWANIKHKKAAADAKRGKIWTRLIKEIQVAARLGGGDVNSNPRLRLAVDKAADANMPKDNVKRAIDRGVGGADGANYEEIRYEGYGIGGAAIIVDTLTDNRTRTVAEVRHAFSKFGGNMGTDGSVAFMFDHVGQFLFAPGTSEDALMEAALEAGANDVNTNDDGSIEVLCDWQEFSKVKDALEAAGFKAELAEVTMKPQNEVDFTGEDAVKMQKLLDALENLDDVQEVYTNAVVVEE.

The protein belongs to the TACO1 family.

The protein localises to the cytoplasm. This is Probable transcriptional regulatory protein BURPS1710b_1385 from Burkholderia pseudomallei (strain 1710b).